The chain runs to 361 residues: Phospho-N-acetylmuramoyl-pentapeptide-transferase (361 aa).

Transmembrane regions (helical) follow at residues L28–L48, T73–L93, Y97–Y117, F134–L154, V168–T188, G200–A220, A237–F257, V264–I284, I289–V309, and Q338–L358.

Belongs to the glycosyltransferase 4 family. MraY subfamily. It depends on Mg(2+) as a cofactor.

It is found in the cell inner membrane. The enzyme catalyses UDP-N-acetyl-alpha-D-muramoyl-L-alanyl-gamma-D-glutamyl-meso-2,6-diaminopimeloyl-D-alanyl-D-alanine + di-trans,octa-cis-undecaprenyl phosphate = di-trans,octa-cis-undecaprenyl diphospho-N-acetyl-alpha-D-muramoyl-L-alanyl-D-glutamyl-meso-2,6-diaminopimeloyl-D-alanyl-D-alanine + UMP. Its pathway is cell wall biogenesis; peptidoglycan biosynthesis. Functionally, catalyzes the initial step of the lipid cycle reactions in the biosynthesis of the cell wall peptidoglycan: transfers peptidoglycan precursor phospho-MurNAc-pentapeptide from UDP-MurNAc-pentapeptide onto the lipid carrier undecaprenyl phosphate, yielding undecaprenyl-pyrophosphoryl-MurNAc-pentapeptide, known as lipid I. In Nitrosomonas europaea (strain ATCC 19718 / CIP 103999 / KCTC 2705 / NBRC 14298), this protein is Phospho-N-acetylmuramoyl-pentapeptide-transferase.